Reading from the N-terminus, the 113-residue chain is Putative pterin-4-alpha-carbinolamine dehydratase (113 aa).

This sequence belongs to the pterin-4-alpha-carbinolamine dehydratase family.

It catalyses the reaction (4aS,6R)-4a-hydroxy-L-erythro-5,6,7,8-tetrahydrobiopterin = (6R)-L-erythro-6,7-dihydrobiopterin + H2O. This is Putative pterin-4-alpha-carbinolamine dehydratase from Nitrosococcus oceani (strain ATCC 19707 / BCRC 17464 / JCM 30415 / NCIMB 11848 / C-107).